The sequence spans 35 residues: Photosystem II reaction center protein T (35 aa).

The helical transmembrane segment at 3 to 23 (ALVYTFLLVSTLGIIFFAIFF) threads the bilayer.

Belongs to the PsbT family. In terms of assembly, PSII is composed of 1 copy each of membrane proteins PsbA, PsbB, PsbC, PsbD, PsbE, PsbF, PsbH, PsbI, PsbJ, PsbK, PsbL, PsbM, PsbT, PsbY, PsbZ, Psb30/Ycf12, at least 3 peripheral proteins of the oxygen-evolving complex and a large number of cofactors. It forms dimeric complexes.

The protein resides in the plastid. It is found in the chloroplast thylakoid membrane. Functionally, found at the monomer-monomer interface of the photosystem II (PS II) dimer, plays a role in assembly and dimerization of PSII. PSII is a light-driven water plastoquinone oxidoreductase, using light energy to abstract electrons from H(2)O, generating a proton gradient subsequently used for ATP formation. This is Photosystem II reaction center protein T from Schisandra chinensis (Chinese magnolia vine).